Reading from the N-terminus, the 358-residue chain is tRNA-specific 2-thiouridylase MnmA (358 aa).

ATP contacts are provided by residues 6 to 13 (ALSGGVDS) and Met-32. Cys-103 functions as the Nucleophile in the catalytic mechanism. Cys-103 and Cys-201 are joined by a disulfide. Gly-127 contacts ATP. The tract at residues 151-153 (KDQ) is interaction with tRNA. Cys-201 (cysteine persulfide intermediate) is an active-site residue.

It belongs to the MnmA/TRMU family.

Its subcellular location is the cytoplasm. The catalysed reaction is S-sulfanyl-L-cysteinyl-[protein] + uridine(34) in tRNA + AH2 + ATP = 2-thiouridine(34) in tRNA + L-cysteinyl-[protein] + A + AMP + diphosphate + H(+). Functionally, catalyzes the 2-thiolation of uridine at the wobble position (U34) of tRNA, leading to the formation of s(2)U34. This Thermotoga petrophila (strain ATCC BAA-488 / DSM 13995 / JCM 10881 / RKU-1) protein is tRNA-specific 2-thiouridylase MnmA.